A 414-amino-acid polypeptide reads, in one-letter code: MTQANLSETLFKPRFKHPETSTLVRRFNHGAQPPVQSALDGKTIPHWYRMINRLMWIWRGIDPREILDVQARIVMSDAERTDDDLYDTVIGYRGGNWIYEWAIQAMVWQQKACAEEDPQLSGRHWLHAATLYNIAAYPHLKGDDLAEQAQALSNRAYEEAAQRLPGTMRQMEFTVPGGAPITGFLHMPKGDGPFPTVLMCGGLDAMQTDYYSLYERYFAPRGIAMLTIDMPSVGFSSKWKLTQDSSLLHQHVLKALPNVPWVDHTRVAAFGFRFGANVAVRLAYLESPRLKAVACLGPVVHTLLSDFKCQQQVPEMYLDVLASRLGMHDASDEALRVELNRYSLKVQGLLGRRCPTPMLSGYWKNDPFSPEEDSRLITSSSADGKLLEIPFNPVYRNFDKGLQEITGWIEKRLC.

This sequence belongs to the FrsA family.

The enzyme catalyses a carboxylic ester + H2O = an alcohol + a carboxylate + H(+). Functionally, catalyzes the hydrolysis of esters. The polypeptide is Esterase FrsA (Shigella sonnei (strain Ss046)).